The sequence spans 37 residues: Cytochrome b6-f complex subunit 5 (37 aa).

A helical transmembrane segment spans residues 5-25 (LLCGIVLGLIPVTLLGLFVAA).

It belongs to the PetG family. In terms of assembly, the 4 large subunits of the cytochrome b6-f complex are cytochrome b6, subunit IV (17 kDa polypeptide, PetD), cytochrome f and the Rieske protein, while the 4 small subunits are PetG, PetL, PetM and PetN. The complex functions as a dimer.

It is found in the cellular thylakoid membrane. Component of the cytochrome b6-f complex, which mediates electron transfer between photosystem II (PSII) and photosystem I (PSI), cyclic electron flow around PSI, and state transitions. PetG is required for either the stability or assembly of the cytochrome b6-f complex. This Synechococcus sp. (strain WH7803) protein is Cytochrome b6-f complex subunit 5.